A 386-amino-acid polypeptide reads, in one-letter code: bHLH transcription factor RHL1 (386 aa).

The disordered stretch occupies residues 119–186; that stretch reads FTGSLNGTQP…RRGQATDPHS (68 aa). The span at 127–137 shows a compositional bias: low complexity; sequence QPQQHFQHPPQ. Polar residues predominate over residues 138-151; that stretch reads GNSNQIQGQNFGAT. Residues 180–193 are basic motif; degenerate; it reads QATDPHSIAERLRR. One can recognise a bHLH domain in the interval 180–229; it reads QATDPHSIAERLRRERIAERMKALQELVPNANKTDKASMLDEIIDYVKFL. Residues 194–229 are helix-loop-helix motif; the sequence is ERIAERMKALQELVPNANKTDKASMLDEIIDYVKFL.

In terms of tissue distribution, expressed in root epidermal cells.

It is found in the nucleus. Transcription factor that regulates the development of root hairs. This chain is bHLH transcription factor RHL1, found in Lotus japonicus (Lotus corniculatus var. japonicus).